The following is a 347-amino-acid chain: MTNKTSLSYKDAGVDIDAGNDLVDRIKGVVKQTRRPEVMGGLGGFGALCALPQKYREPILVSGTDGVGTKLRLAMDLKRHDTIGIDLVAMCVNDLVVQGAEPLFFLDYFATGKLDVDTAASVITGIAEGCKQSGCALVGGETAEMPGMYHGDDYDVAGFCVGVVEKSEIIDGSKVTPGDVLVALGASGPHSNGYSLVRKILDVSNTNPEQTSLEGKSLADHLLEPTKIYVKSILSLIEQLDIHAIAHLTGGGFWENIPRVLPQGMQAVIDEASWQWPAVFSWLQHAGNVSRHEMYRTFNCGVGMVVALPAELADKAVELLTASGEKAWKIGVIAAATEGAEQVIINP.

Belongs to the AIR synthase family.

Its subcellular location is the cytoplasm. It carries out the reaction 2-formamido-N(1)-(5-O-phospho-beta-D-ribosyl)acetamidine + ATP = 5-amino-1-(5-phospho-beta-D-ribosyl)imidazole + ADP + phosphate + H(+). Its pathway is purine metabolism; IMP biosynthesis via de novo pathway; 5-amino-1-(5-phospho-D-ribosyl)imidazole from N(2)-formyl-N(1)-(5-phospho-D-ribosyl)glycinamide: step 2/2. This Yersinia pseudotuberculosis serotype IB (strain PB1/+) protein is Phosphoribosylformylglycinamidine cyclo-ligase.